Here is a 635-residue protein sequence, read N- to C-terminus: MHLSEITHPNQLHGLSIRQLEDIARQIREKHLQTVATSGGHLGPGLGVVELTIALYQTLDLDRDKVIWDVGHQAYPHKMLTGRYNNFNTLRQKNGIAGYLKRCESKFDHFGAGHASTSISAALGMALARDAQGEDYKVAAIIGDGALTGGMALEAINHAGHLPNTNLMVILNDNEMSISPNVGAISRYLNKVRLSEPVQFLSDNLEEQFKHLPFFGDVTPEMDRLKEGMKRLAVPKVGAVIEELGFKYFGPIDGHNLRELINTFKQAHKVHGPVFVHVATVKGKGYELAEQDQVGYHAQSPFNLVTGKPIPSSKPKPPGYSKVFAHTLTKLAENNPKIIGITAAMATGTGLDKLQQKLPKQYIDVGIAEQHAVTLAAGLACEGMRPVVAIYSTFLQRAYDQVIHDVCIQNLPVFFCMDRAGIVGADGPTHQGMYDIAYLRCIPNLVIMAPKDEAELQRMIVTGVNYTDGPIAMRYPRGNGLGVPLMEEGWEALPIGKGEILRNGDDLLLLGYGTMVNTAMQVAEILGEHGIEATVVNARFVKPLDTDLIVPLAKQTGKVVTLEEGCLMGGFGSAVAEALLDHNVLVPVKRFGVPDQLVDHAKPDESFADLGLTSSQIADEVLKSFFKTQEPSVIS.

Residues H72 and 113-115 each bind thiamine diphosphate; that span reads GHA. Residue D144 participates in Mg(2+) binding. Thiamine diphosphate contacts are provided by residues 145-146, N174, Y286, and E369; that span reads GA. N174 serves as a coordination point for Mg(2+).

It belongs to the transketolase family. DXPS subfamily. Homodimer. Mg(2+) is required as a cofactor. It depends on thiamine diphosphate as a cofactor.

It catalyses the reaction D-glyceraldehyde 3-phosphate + pyruvate + H(+) = 1-deoxy-D-xylulose 5-phosphate + CO2. The protein operates within metabolic intermediate biosynthesis; 1-deoxy-D-xylulose 5-phosphate biosynthesis; 1-deoxy-D-xylulose 5-phosphate from D-glyceraldehyde 3-phosphate and pyruvate: step 1/1. Its function is as follows. Catalyzes the acyloin condensation reaction between C atoms 2 and 3 of pyruvate and glyceraldehyde 3-phosphate to yield 1-deoxy-D-xylulose-5-phosphate (DXP). This Gloeothece citriformis (strain PCC 7424) (Cyanothece sp. (strain PCC 7424)) protein is 1-deoxy-D-xylulose-5-phosphate synthase.